We begin with the raw amino-acid sequence, 174 residues long: uncharacterized protein (174 aa).

A helical transmembrane segment spans residues 7-27 (LIILAIFTLWVGGFGYYLYLI).

The protein localises to the membrane. This is an uncharacterized protein from Rickettsia prowazekii (strain Madrid E).